The primary structure comprises 99 residues: Acylphosphatase (99 aa).

The Acylphosphatase-like domain occupies 11 to 97 (ARRIHVKGKV…VVAQGFTQKP (87 aa)). Residues Arg26 and Asn44 contribute to the active site.

Belongs to the acylphosphatase family.

It catalyses the reaction an acyl phosphate + H2O = a carboxylate + phosphate + H(+). The chain is Acylphosphatase (acyP) from Rhizorhabdus wittichii (strain DSM 6014 / CCUG 31198 / JCM 15750 / NBRC 105917 / EY 4224 / RW1) (Sphingomonas wittichii).